The sequence spans 504 residues: uncharacterized protein (504 aa).

Residues 26–46 (ILFLLLGLIILVNISINVTTV) form a helical membrane-spanning segment. Over residues 103 to 112 (PTQCSSSSTH) the composition is skewed to polar residues. Disordered stretches follow at residues 103 to 180 (PTQC…TRPM), 313 to 402 (YDAR…PLTT), and 431 to 504 (QRLA…GKLN). Positions 113–128 (YFRKHSNDRRSRRRYC) are enriched in basic residues. The span at 135 to 147 (QIRQSNQQQSCHS) shows a compositional bias: polar residues. A compositionally biased stretch (basic and acidic residues) spans 313 to 324 (YDARDQWRRGTE). Polar residues predominate over residues 349–377 (SSQAHRQNFPSYTHSQPNHSPPQSVGYSS). Composition is skewed to basic and acidic residues over residues 378–389 (RESHEVRRRAPD) and 467–478 (LELKRQVQENRG). Residues 494–504 (SLHRSRTGKLN) show a composition bias toward basic residues.

The protein localises to the membrane. This is an uncharacterized protein from Rattus norvegicus (Rat).